A 164-amino-acid polypeptide reads, in one-letter code: Protein-export protein SecB (164 aa).

This sequence belongs to the SecB family. As to quaternary structure, homotetramer, a dimer of dimers. One homotetramer interacts with 1 SecA dimer.

Its subcellular location is the cytoplasm. One of the proteins required for the normal export of preproteins out of the cell cytoplasm. It is a molecular chaperone that binds to a subset of precursor proteins, maintaining them in a translocation-competent state. It also specifically binds to its receptor SecA. This Rhodopseudomonas palustris (strain BisB18) protein is Protein-export protein SecB.